A 213-amino-acid chain; its full sequence is Pyridoxine/pyridoxamine 5'-phosphate oxidase (213 aa).

Substrate is bound by residues 10-13 (REEY) and lysine 68. FMN is bound by residues 63-68 (RMLLLK), 78-79 (FT), lysine 85, and glutamine 107. Residues tyrosine 125, arginine 129, and serine 133 each contribute to the substrate site. FMN is bound by residues 142–143 (QS) and tryptophan 186. Substrate is bound at residue 192 to 194 (RLH). Arginine 196 is a binding site for FMN.

This sequence belongs to the pyridoxamine 5'-phosphate oxidase family. Homodimer. FMN serves as cofactor.

It carries out the reaction pyridoxamine 5'-phosphate + O2 + H2O = pyridoxal 5'-phosphate + H2O2 + NH4(+). The enzyme catalyses pyridoxine 5'-phosphate + O2 = pyridoxal 5'-phosphate + H2O2. Its pathway is cofactor metabolism; pyridoxal 5'-phosphate salvage; pyridoxal 5'-phosphate from pyridoxamine 5'-phosphate: step 1/1. The protein operates within cofactor metabolism; pyridoxal 5'-phosphate salvage; pyridoxal 5'-phosphate from pyridoxine 5'-phosphate: step 1/1. Its function is as follows. Catalyzes the oxidation of either pyridoxine 5'-phosphate (PNP) or pyridoxamine 5'-phosphate (PMP) into pyridoxal 5'-phosphate (PLP). This chain is Pyridoxine/pyridoxamine 5'-phosphate oxidase, found in Nocardioides sp. (strain ATCC BAA-499 / JS614).